The primary structure comprises 388 residues: Succinate--CoA ligase [ADP-forming] subunit beta (388 aa).

In terms of domain architecture, ATP-grasp spans 9-244; it reads KQLFAEYGLP…PSQDDPREAH (236 aa). ATP-binding positions include K46, 53–55, E99, T102, and E107; that span reads GRG. Residues N199 and D213 each contribute to the Mg(2+) site. Residues N264 and 321–323 contribute to the substrate site; that span reads GIV.

The protein belongs to the succinate/malate CoA ligase beta subunit family. Heterotetramer of two alpha and two beta subunits. Mg(2+) serves as cofactor.

It catalyses the reaction succinate + ATP + CoA = succinyl-CoA + ADP + phosphate. The enzyme catalyses GTP + succinate + CoA = succinyl-CoA + GDP + phosphate. It functions in the pathway carbohydrate metabolism; tricarboxylic acid cycle; succinate from succinyl-CoA (ligase route): step 1/1. In terms of biological role, succinyl-CoA synthetase functions in the citric acid cycle (TCA), coupling the hydrolysis of succinyl-CoA to the synthesis of either ATP or GTP and thus represents the only step of substrate-level phosphorylation in the TCA. The beta subunit provides nucleotide specificity of the enzyme and binds the substrate succinate, while the binding sites for coenzyme A and phosphate are found in the alpha subunit. In Pseudomonas syringae pv. syringae (strain B728a), this protein is Succinate--CoA ligase [ADP-forming] subunit beta.